Reading from the N-terminus, the 137-residue chain is Protein FrxA (137 aa).

This Pyrococcus furiosus (strain ATCC 43587 / DSM 3638 / JCM 8422 / Vc1) protein is Protein FrxA (frxA).